The primary structure comprises 382 residues: MGVCCSKGTGIIVEHGADDGNECGDGEAEVRDTNDGAVVRTRGSSKHVSMSIKQGKKGINQDAMTVWENFGGEEDTIFCGVFDGHGPMGHKISRHVCENLPSRVHSKIRSSKSAGDENIENNSSQSQEELFREFEDILVTFFKQIDSELGLDSPYDSFCSGTTAVTVFKQADCLVIANLGHSRAVLGTRSKNSFKAVQLTVDLKPCVQREAERIVSCKGRVFAMEEEPDVYRVWMPDDDCPGLAMSRAFGDFCLKDYGLVCIPDVFCRKVSREDEFVVLATDGIWDVLSNEEVVKVVGSCKDRSVAAEMLVQRAARTWRTKFPASKADDCAVVVLYLNHRPYPREGNVSRAISTISWRSNKSNNECYGAAPLSPLGLSQRVS.

In terms of domain architecture, PPM-type phosphatase spans His47 to Leu337. 2 residues coordinate Mn(2+): Asp83 and Gly84. Positions Lys107 to Ser126 are disordered. Asp282 and Asp328 together coordinate Mn(2+).

This sequence belongs to the PP2C family. Requires Mg(2+) as cofactor. The cofactor is Mn(2+).

It catalyses the reaction O-phospho-L-seryl-[protein] + H2O = L-seryl-[protein] + phosphate. It carries out the reaction O-phospho-L-threonyl-[protein] + H2O = L-threonyl-[protein] + phosphate. The sequence is that of Probable protein phosphatase 2C 65 from Arabidopsis thaliana (Mouse-ear cress).